The chain runs to 98 residues: NADH-ubiquinone oxidoreductase chain 4L (98 aa).

3 helical membrane passes run 1-21, 29-49, and 61-81; these read MTPT…GMLI, SLLC…LIAL, and IILL…LVSI.

Belongs to the complex I subunit 4L family. In terms of assembly, core subunit of respiratory chain NADH dehydrogenase (Complex I) which is composed of 45 different subunits.

It localises to the mitochondrion inner membrane. The catalysed reaction is a ubiquinone + NADH + 5 H(+)(in) = a ubiquinol + NAD(+) + 4 H(+)(out). Functionally, core subunit of the mitochondrial membrane respiratory chain NADH dehydrogenase (Complex I) which catalyzes electron transfer from NADH through the respiratory chain, using ubiquinone as an electron acceptor. Part of the enzyme membrane arm which is embedded in the lipid bilayer and involved in proton translocation. This chain is NADH-ubiquinone oxidoreductase chain 4L (MT-ND4L), found in Macaca maura (Moor macaque).